A 245-amino-acid chain; its full sequence is Demethylmenaquinone methyltransferase (245 aa).

S-adenosyl-L-methionine is bound by residues T58, D79, and 106–107 (NA).

The protein belongs to the class I-like SAM-binding methyltransferase superfamily. MenG/UbiE family.

The catalysed reaction is a 2-demethylmenaquinol + S-adenosyl-L-methionine = a menaquinol + S-adenosyl-L-homocysteine + H(+). It functions in the pathway quinol/quinone metabolism; menaquinone biosynthesis; menaquinol from 1,4-dihydroxy-2-naphthoate: step 2/2. Functionally, methyltransferase required for the conversion of demethylmenaquinol (DMKH2) to menaquinol (MKH2). This Halalkalibacterium halodurans (strain ATCC BAA-125 / DSM 18197 / FERM 7344 / JCM 9153 / C-125) (Bacillus halodurans) protein is Demethylmenaquinone methyltransferase.